The sequence spans 173 residues: Alpha-crystallin A chain (173 aa).

An N-acetylmethionine modification is found at Met1. The required for complex formation with BFSP1 and BFSP2 stretch occupies residues 1–63; sequence MDIAIQQPWF…RTVLDSGVSE (63 aa). A Deamidated glutamine; partial modification is found at Gln6. Phosphoserine is present on Ser45. Gln50 is modified (deamidated glutamine; partial). One can recognise a sHSP domain in the interval 52-162; that stretch reads LFRTVLDSGV…GHSERAIPVS (111 aa). N6-acetyllysine is present on residues Lys70 and Lys99. His100 contacts Zn(2+). Asn101 carries the deamidated asparagine; partial modification. Glu102 and His107 together coordinate Zn(2+). Residue Ser122 is modified to Phosphoserine. Position 123 is a deamidated asparagine; partial (Asn123). The disordered stretch occupies residues 144–173; the sequence is PKVPSGVDAGHSERAIPVSREEKPSSAPSS. Over residues 153–167 the composition is skewed to basic and acidic residues; that stretch reads GHSERAIPVSREEKP. Residue His154 coordinates Zn(2+). Ser162 carries an O-linked (GlcNAc) serine glycan.

This sequence belongs to the small heat shock protein (HSP20) family. Heteromer composed of three CRYAA and one CRYAB subunits. Inter-subunit bridging via zinc ions enhances stability, which is crucial as there is no protein turn over in the lens. Can also form homodimers and homotetramers (dimers of dimers) which serve as the building blocks of homooligomers. Within homooligomers, the zinc-binding motif is created from residues of 3 different molecules. His-100 and Glu-102 from one molecule are ligands of the zinc ion, and His-107 and His-154 residues from additional molecules complete the site with tetrahedral coordination geometry. Part of a complex required for lens intermediate filament formation composed of BFSP1, BFSP2 and CRYAA. Acetylation at Lys-70 may increase chaperone activity. Post-translationally, undergoes age-dependent proteolytical cleavage at the C-terminus.

It localises to the cytoplasm. The protein localises to the nucleus. Its function is as follows. Contributes to the transparency and refractive index of the lens. Acts as a chaperone, preventing aggregation of various proteins under a wide range of stress conditions. Required for the correct formation of lens intermediate filaments as part of a complex composed of BFSP1, BFSP2 and CRYAA. This is Alpha-crystallin A chain (CRYAA) from Neovison vison (American mink).